Consider the following 146-residue polypeptide: Large ribosomal subunit protein uL15 (146 aa).

The interval 1 to 54 (MTLRLNELAPAEGAKRDNRRLGRGIGSGVGKTGGRGVKGQKSRKSGGVRPGFEG) is disordered. Residues 23 to 37 (RGIGSGVGKTGGRGV) show a composition bias toward gly residues.

It belongs to the universal ribosomal protein uL15 family. In terms of assembly, part of the 50S ribosomal subunit.

Its function is as follows. Binds to the 23S rRNA. This Acinetobacter baylyi (strain ATCC 33305 / BD413 / ADP1) protein is Large ribosomal subunit protein uL15.